Here is a 325-residue protein sequence, read N- to C-terminus: Tagatose 1,6-diphosphate aldolase 1 (325 aa).

This sequence belongs to the aldolase LacD family.

The enzyme catalyses D-tagatofuranose 1,6-bisphosphate = D-glyceraldehyde 3-phosphate + dihydroxyacetone phosphate. The protein operates within carbohydrate metabolism; D-tagatose 6-phosphate degradation; D-glyceraldehyde 3-phosphate and glycerone phosphate from D-tagatose 6-phosphate: step 2/2. This chain is Tagatose 1,6-diphosphate aldolase 1 (lacD1), found in Streptococcus pyogenes serotype M1.